A 150-amino-acid polypeptide reads, in one-letter code: Large ribosomal subunit protein bL9 (150 aa).

It belongs to the bacterial ribosomal protein bL9 family.

Its function is as follows. Binds to the 23S rRNA. The protein is Large ribosomal subunit protein bL9 of Corynebacterium glutamicum (strain R).